A 194-amino-acid polypeptide reads, in one-letter code: Adenylate kinase (194 aa).

10 to 15 (GAGKGT) lines the ATP pocket. The segment at 30–59 (STGDMLRAAVAAGTPVGLKAKAVMESGGLV) is NMP. AMP contacts are provided by residues Thr31, Arg36, 57 to 59 (GLV), 85 to 88 (GFPR), and Gln92. The segment at 126–142 (NRAAEAKAKGEPVRKDD) is LID. ATP is bound at residue Arg127. The AMP site is built by Arg139 and Arg150. Ala178 is a binding site for ATP.

The protein belongs to the adenylate kinase family. Monomer.

It localises to the cytoplasm. The catalysed reaction is AMP + ATP = 2 ADP. It functions in the pathway purine metabolism; AMP biosynthesis via salvage pathway; AMP from ADP: step 1/1. Its function is as follows. Catalyzes the reversible transfer of the terminal phosphate group between ATP and AMP. Plays an important role in cellular energy homeostasis and in adenine nucleotide metabolism. The polypeptide is Adenylate kinase (Azorhizobium caulinodans (strain ATCC 43989 / DSM 5975 / JCM 20966 / LMG 6465 / NBRC 14845 / NCIMB 13405 / ORS 571)).